A 549-amino-acid polypeptide reads, in one-letter code: Urocanate hydratase (549 aa).

NAD(+) contacts are provided by residues 46–47 (GG), glutamine 124, glutamate 190, arginine 195, 236–237 (NA), 257–261 (QTSAH), 267–268 (YV), and tyrosine 316. Residue cysteine 404 is part of the active site. Glycine 486 contributes to the NAD(+) binding site.

It belongs to the urocanase family. Requires NAD(+) as cofactor.

The protein resides in the cytoplasm. The enzyme catalyses 4-imidazolone-5-propanoate = trans-urocanate + H2O. It functions in the pathway amino-acid degradation; L-histidine degradation into L-glutamate; N-formimidoyl-L-glutamate from L-histidine: step 2/3. Its function is as follows. Catalyzes the conversion of urocanate to 4-imidazolone-5-propionate. This Thermoanaerobacter pseudethanolicus (strain ATCC 33223 / 39E) (Clostridium thermohydrosulfuricum) protein is Urocanate hydratase.